Reading from the N-terminus, the 128-residue chain is Large ribosomal subunit protein bL12 (128 aa).

It belongs to the bacterial ribosomal protein bL12 family. As to quaternary structure, homodimer. Part of the ribosomal stalk of the 50S ribosomal subunit. Forms a multimeric L10(L12)X complex, where L10 forms an elongated spine to which 2 to 4 L12 dimers bind in a sequential fashion. Binds GTP-bound translation factors.

Functionally, forms part of the ribosomal stalk which helps the ribosome interact with GTP-bound translation factors. Is thus essential for accurate translation. This Corynebacterium efficiens (strain DSM 44549 / YS-314 / AJ 12310 / JCM 11189 / NBRC 100395) protein is Large ribosomal subunit protein bL12.